The following is a 1752-amino-acid chain: Chitin synthase E (1752 aa).

1–8 (GESGSGKT) is a binding site for ATP. The segment at 492-520 (SSKPLRMPSMARRKTSPSSRLAFDAGDAD) is disordered. Residues 558–582 (LDIVNKCLSSTNLNPYFIFCLKPND) are actin-binding. Helical transmembrane passes span 789-809 (WIALVYLLTFYIPDFAIKLFG) and 828-848 (LIIWFSCGVAIFFIVAFPGLV). Residues 852–940 (QHVYSAAELS…LLDYRPTNIS (89 aa)) form the Cytochrome b5 heme-binding domain. N938 and N963 each carry an N-linked (GlcNAc...) asparagine glycan. The helical transmembrane segment at 1099 to 1119 (FILAISVLICSIIVFKFLAAL) threads the bilayer. N-linked (GlcNAc...) asparagine glycosylation is found at N1322, N1356, and N1462. 3 consecutive transmembrane segments (helical) span residues 1494 to 1514 (LSTVIQPVTLAYIIYLIYWLV), 1520 to 1540 (IPYTSLILLAAIYGLQALIFI), and 1547 to 1567 (MVGWMIVYLLALPVFSLPCPS). N1685 is a glycosylation site (N-linked (GlcNAc...) asparagine). The 56-residue stretch at 1689 to 1744 (LPSDDAILAEIREILRTADLMSVTKKSIKLELERAFGVNLDLKRPYINSGKGYTFP) folds into the DEK-C domain.

It in the N-terminal section; belongs to the TRAFAC class myosin-kinesin ATPase superfamily. Myosin family. This sequence in the C-terminal section; belongs to the chitin synthase family. Class V subfamily.

It localises to the cell membrane. It is found in the cell septum. Its subcellular location is the cell tip. It catalyses the reaction [(1-&gt;4)-N-acetyl-beta-D-glucosaminyl](n) + UDP-N-acetyl-alpha-D-glucosamine = [(1-&gt;4)-N-acetyl-beta-D-glucosaminyl](n+1) + UDP + H(+). Its function is as follows. Polymerizes chitin, a structural polymer of the cell wall and septum, by transferring the sugar moiety of UDP-GlcNAc to the non-reducing end of the growing chitin polymer. Important for hyphal growth and conidiophore development but not pathogenicity. This is Chitin synthase E from Aspergillus fumigatus (Neosartorya fumigata).